The chain runs to 911 residues: General transcription factor 3C polypeptide 2 (911 aa).

2 disordered regions span residues 34–187 (LDVK…RRRA) and 205–297 (ALPA…MAPN). Residues 35-46 (DVKTSSEMTSAE) are compositionally biased toward polar residues. Position 63 is a phosphoserine (S63). Basic and acidic residues predominate over residues 64 to 81 (PDQRRLPPEQESLSRLEQ). Positions 92–112 (SKPRASKPGRKRGGRTRKGPK) are enriched in basic residues. Over residues 114 to 123 (PQQPNPPSAP) the composition is skewed to pro residues. Residues S132, S165, S167, S220, and S260 each carry the phosphoserine modification. Over residues 253-262 (EAEDVEESEG) the composition is skewed to acidic residues. Over residues 263–275 (PSESSSEPEPAVP) the composition is skewed to low complexity. WD repeat units follow at residues 465-521 (CDNG…ALLA) and 552-593 (SECG…PLQR). S597 carries the phosphoserine modification. The stretch at 611–651 (AHDQAVRTLQWCKANSHFLASAGSDRKIKFWDLRRPYEPIN) is one WD 3 repeat. The interval 765–785 (SPEGPDHSSASSGVPNPPKAR) is disordered. Residues 832 to 874 (LQLEAIHKVRFSPNLDSYGWLVSGGQSGLVRIHFVRGLASPLG) form a WD 4 repeat. 3 positions are modified to phosphoserine: S871, S892, and S893. The tract at residues 889-911 (FQPSSPTRRPGFSPTSHRLLPTP) is disordered. T895 carries the post-translational modification Phosphothreonine. The residue at position 901 (S901) is a Phosphoserine.

Part of the TFIIIC subcomplex TFIIIC2, consisting of six subunits, GTF3C1, GTF3C2, GTF3C3, GTF3C4, GTF3C5 and GTF3C6.

It is found in the nucleus. Required for RNA polymerase III-mediated transcription. Component of TFIIIC that initiates transcription complex assembly on tRNA and is required for transcription of 5S rRNA and other stable nuclear and cytoplasmic RNAs. May play a direct role in stabilizing interactions of TFIIIC2 with TFIIIC1. The sequence is that of General transcription factor 3C polypeptide 2 (GTF3C2) from Pongo abelii (Sumatran orangutan).